Here is a 503-residue protein sequence, read N- to C-terminus: ATP synthase subunit alpha (503 aa).

Residue 170–177 coordinates ATP; the sequence is GDRQTGKT.

F-type ATPases have 2 components, CF(1) - the catalytic core - and CF(0) - the membrane proton channel. CF(1) has five subunits: alpha(3), beta(3), gamma(1), delta(1), epsilon(1). CF(0) has four main subunits: a(1), b(1), b'(1) and c(9-12).

It localises to the cellular thylakoid membrane. The catalysed reaction is ATP + H2O + 4 H(+)(in) = ADP + phosphate + 5 H(+)(out). Its activity is regulated as follows. Inhibited by dicyclohexylcarbodiimide. In terms of biological role, produces ATP from ADP in the presence of a proton gradient across the membrane. The alpha chain is a regulatory subunit. Its function is as follows. The complex from the organism is particularly stable to disruption and remains functional after 6 hrs at 55 degrees Celsius. The protein is ATP synthase subunit alpha of Thermosynechococcus vestitus (strain NIES-2133 / IAM M-273 / BP-1).